A 405-amino-acid polypeptide reads, in one-letter code: MQYLILSLIFLIPSLGMLTGLSIAATVLFFLLIIVITELISFIRKQEFSKKFLIKLYPRFGFDDIFCVKNRIKTELLFIAWCFISCLFTIHPINSLVTFTKVFALLFLRFVNNVVTFQNILYLKNSLILGIITAILLFFIEYSSHGFLTRMFKTHFGLYMLDRGCALLSITTWVVIIILFSNGKNINAFILYIVVLYLLSISDSLASFVGFSIGGIIFILARLIKKIFFKLITISLITGSLLFPIIAKQIDPHNLSEKYLATKPSAAHRLFIWHFVANKIIIKPILGYGFASSKYIKTSDNEMIDYRGEKLHPLPLHPHNNILQITLELGILGLALFLCLVYKYLKEIDNIKISNFRAASYSCFINYYIIGMISYNIWQTWWILSGIWILVLMKLLVKPDIIIDN.

A run of 10 helical transmembrane segments spans residues 23–43 (IAAT…ISFI), 77–97 (LFIA…NSLV), 120–140 (ILYL…LFFI), 156–178 (FGLY…VIII), 201–221 (ISDS…FILA), 227–247 (IFFK…PIIA), 270–290 (LFIW…GYGF), 322–342 (ILQI…CLVY), 353–375 (ISNF…MISY), and 377–397 (IWQT…KLLV).

It belongs to the O-antigen ligase family.

It is found in the membrane. In Rickettsia typhi (strain ATCC VR-144 / Wilmington), this protein is Putative polysaccharide ligase RT0347.